A 131-amino-acid polypeptide reads, in one-letter code: Transcription antitermination protein NusB (131 aa).

This sequence belongs to the NusB family.

Involved in transcription antitermination. Required for transcription of ribosomal RNA (rRNA) genes. Binds specifically to the boxA antiterminator sequence of the ribosomal RNA (rrn) operons. The chain is Transcription antitermination protein NusB from Ligilactobacillus salivarius (strain UCC118) (Lactobacillus salivarius).